A 50-amino-acid polypeptide reads, in one-letter code: Insulin (50 aa).

Disulfide bonds link Cys-7–Cys-36, Cys-19–Cys-49, and Cys-35–Cys-40.

Belongs to the insulin family. As to quaternary structure, heterodimer of a B chain and an A chain linked by two disulfide bonds.

Its subcellular location is the secreted. Its function is as follows. Insulin decreases blood glucose concentration. It increases cell permeability to monosaccharides, amino acids and fatty acids. It accelerates glycolysis, the pentose phosphate cycle, and glycogen synthesis in liver. In Proechimys guairae (Guaira spiny rat), this protein is Insulin (INS).